A 185-amino-acid chain; its full sequence is Large ribosomal subunit protein uL22 (185 aa).

The interval valine 160 to glutamate 185 is disordered.

This sequence belongs to the universal ribosomal protein uL22 family.

This Maconellicoccus hirsutus (Pink hibiscus mealybug) protein is Large ribosomal subunit protein uL22 (RpL17).